We begin with the raw amino-acid sequence, 336 residues long: MTEAQTACPTTETPVAAPVAPRWRVADVIALYELPFNDLLFRAQQTHREHFDANAIQLSTLLSIKTGGCEEDCGYCSQSAHHDTGLKAEKLMEVDAVLAAARTAKENGATRFCMGAAWRNPKDRHIEPIKEMIRGVKDMGLETCVTLGMLEEHQAKALAEAGLDYYNHNLDTSPEFYGQIISTRTYQDRLDTLERVRDAGINVCCGGIIGMGESRRERAGLIAQLANMNPYPESVPINNLVAIEGTPLENAQALDPFEFVRTIAVARITMPKAMVRLSAGREQLDDSMQALCFLAGANSMFYGDVLLTTGNPRAEADRKLLARLGMSATEATQLSA.

In terms of domain architecture, Radical SAM core spans Asn-54–Arg-281. 3 residues coordinate [4Fe-4S] cluster: Cys-69, Cys-73, and Cys-76. [2Fe-2S] cluster is bound by residues Cys-113, Cys-144, Cys-204, and Arg-276.

It belongs to the radical SAM superfamily. Biotin synthase family. As to quaternary structure, homodimer. It depends on [4Fe-4S] cluster as a cofactor. [2Fe-2S] cluster is required as a cofactor.

It catalyses the reaction (4R,5S)-dethiobiotin + (sulfur carrier)-SH + 2 reduced [2Fe-2S]-[ferredoxin] + 2 S-adenosyl-L-methionine = (sulfur carrier)-H + biotin + 2 5'-deoxyadenosine + 2 L-methionine + 2 oxidized [2Fe-2S]-[ferredoxin]. It functions in the pathway cofactor biosynthesis; biotin biosynthesis; biotin from 7,8-diaminononanoate: step 2/2. Catalyzes the conversion of dethiobiotin (DTB) to biotin by the insertion of a sulfur atom into dethiobiotin via a radical-based mechanism. The sequence is that of Biotin synthase from Burkholderia thailandensis (strain ATCC 700388 / DSM 13276 / CCUG 48851 / CIP 106301 / E264).